We begin with the raw amino-acid sequence, 100 residues long: NADH-quinone oxidoreductase subunit K (100 aa).

Helical transmembrane passes span 3–23 (PTSY…VGVI), 29–49 (LVLF…LVTF), and 60–80 (IVVF…LALL).

The protein belongs to the complex I subunit 4L family. In terms of assembly, NDH-1 is composed of 14 different subunits. Subunits NuoA, H, J, K, L, M, N constitute the membrane sector of the complex.

It localises to the cell membrane. The catalysed reaction is a quinone + NADH + 5 H(+)(in) = a quinol + NAD(+) + 4 H(+)(out). In terms of biological role, NDH-1 shuttles electrons from NADH, via FMN and iron-sulfur (Fe-S) centers, to quinones in the respiratory chain. The immediate electron acceptor for the enzyme in this species is believed to be ubiquinone. Couples the redox reaction to proton translocation (for every two electrons transferred, four hydrogen ions are translocated across the cytoplasmic membrane), and thus conserves the redox energy in a proton gradient. The chain is NADH-quinone oxidoreductase subunit K from Roseiflexus castenholzii (strain DSM 13941 / HLO8).